A 303-amino-acid chain; its full sequence is Tyrosine recombinase XerC (303 aa).

In terms of domain architecture, Core-binding (CB) spans 6-92 (ASLAPQVEAF…ALRSFLNWLV (87 aa)). The region spanning 113-292 (HLPKNIDVDE…DFQHLATVYD (180 aa)) is the Tyr recombinase domain. Catalysis depends on residues R152, K176, H244, R247, and H270. Residue Y279 is the O-(3'-phospho-DNA)-tyrosine intermediate of the active site.

Belongs to the 'phage' integrase family. XerC subfamily. Forms a cyclic heterotetrameric complex composed of two molecules of XerC and two molecules of XerD, in which XerC interacts with XerD via its C-terminal region, XerD interacts with XerC via its C-terminal region and so on.

The protein resides in the cytoplasm. FtsK may regulate the catalytic switch between XerC and XerD in the heterotetrameric complex during the two steps of the recombination process. Functionally, site-specific tyrosine recombinase, which acts by catalyzing the cutting and rejoining of the recombining DNA molecules. Binds cooperatively to specific DNA consensus sequences that are separated from XerD binding sites by a short central region, forming the heterotetrameric XerC-XerD complex that recombines DNA substrates. The complex is essential to convert dimers of the bacterial chromosome into monomers to permit their segregation at cell division. It also contributes to the segregational stability of plasmids. In the complex XerC specifically exchanges the top DNA strands. This Yersinia pestis protein is Tyrosine recombinase XerC.